The sequence spans 437 residues: MGKNVVVLGTQWGDEGKGKVVDLLTDKASLVVRYQGGHNAGHTLVIDGEKTVLHLIPSGVLRDNVKCVIGNGVVLSPEALMREIGMLEARGVPVRERLLISAACPLILPFHVALDVARETARGDKPIGTTGRGIGPAYEDKVARRGLRVGDLFNPELFAAKLEEVLEYHNFTLVNYYKVDAVDFQKTFDDAMAVADILKAMIVDVTELLDQTRLAGDNILFEGAQGTLLDIDHGTYPYVTSSNTTAGGVATGAGFGPLHLDYVLGIIKAYTTRVGSGPFPTELYDGLDKQDPVGKHLGDKGHEFGATTGRLRRTGWLDAVAMRRAVQINSISGFCLTKLDVLDGLETLKICTGYKLEDGTVTNVTPLAAEGYEKVTPIYEEMPGWSENTVGVTSLDGLPKAAIDYVKRIEELTGVPVDIISTGPDRVETMILRNPFA.

GTP is bound by residues 13–19 (GDEGKGK) and 41–43 (GHT). Asp14 (proton acceptor) is an active-site residue. Positions 14 and 41 each coordinate Mg(2+). Residues 14 to 17 (DEGK), 39 to 42 (NAGH), Thr130, Arg144, Gln225, Thr240, and Arg310 each bind IMP. His42 functions as the Proton donor in the catalytic mechanism. 306-312 (ATTGRLR) contributes to the substrate binding site. Residues Arg312, 338–340 (KLD), and 421–423 (STG) each bind GTP.

It belongs to the adenylosuccinate synthetase family. Homodimer. Mg(2+) serves as cofactor.

It is found in the cytoplasm. The catalysed reaction is IMP + L-aspartate + GTP = N(6)-(1,2-dicarboxyethyl)-AMP + GDP + phosphate + 2 H(+). The protein operates within purine metabolism; AMP biosynthesis via de novo pathway; AMP from IMP: step 1/2. Its function is as follows. Plays an important role in the de novo pathway of purine nucleotide biosynthesis. Catalyzes the first committed step in the biosynthesis of AMP from IMP. In Pseudoalteromonas translucida (strain TAC 125), this protein is Adenylosuccinate synthetase 1.